Reading from the N-terminus, the 461-residue chain is Cysteine--tRNA ligase (461 aa).

Residue Cys28 coordinates Zn(2+). The 'HIGH' region motif lies at 30–40; it reads ITVYDLCHIGH. 3 residues coordinate Zn(2+): Cys209, His234, and Glu238. The 'KMSKS' region motif lies at 266–270; it reads KMSKS. Lys269 contacts ATP.

This sequence belongs to the class-I aminoacyl-tRNA synthetase family. Monomer. It depends on Zn(2+) as a cofactor.

Its subcellular location is the cytoplasm. It catalyses the reaction tRNA(Cys) + L-cysteine + ATP = L-cysteinyl-tRNA(Cys) + AMP + diphosphate. This chain is Cysteine--tRNA ligase, found in Shigella sonnei (strain Ss046).